The primary structure comprises 310 residues: Formyltetrahydrofolate deformylase (310 aa).

The segment at 1–30 (MGKGSMTAHATPNEPDYPPPPGGPPPPADI) is disordered. The segment covering 15–28 (PDYPPPPGGPPPPA) has biased composition (pro residues). An ACT domain is found at 32–108 (RLLLRCHDRP…VADKFGIDYR (77 aa)). Residue Asp-255 is part of the active site.

It belongs to the PurU family.

It carries out the reaction (6R)-10-formyltetrahydrofolate + H2O = (6S)-5,6,7,8-tetrahydrofolate + formate + H(+). It functions in the pathway purine metabolism; IMP biosynthesis via de novo pathway; formate from 10-formyl-5,6,7,8-tetrahydrofolate: step 1/1. In terms of biological role, catalyzes the hydrolysis of 10-formyltetrahydrofolate (formyl-FH4) to formate and tetrahydrofolate (FH4). The sequence is that of Formyltetrahydrofolate deformylase from Mycobacterium bovis (strain ATCC BAA-935 / AF2122/97).